The chain runs to 282 residues: Shikimate dehydrogenase (NADP(+)) (282 aa).

Shikimate is bound by residues 19–21 and threonine 66; that span reads SFS. Lysine 70 functions as the Proton acceptor in the catalytic mechanism. 2 residues coordinate shikimate: asparagine 91 and aspartate 106. Residues 130–134, 152–157, threonine 196, methionine 200, and leucine 224 contribute to the NADP(+) site; these read GAGGA and NRTVEK. Tyrosine 226 lines the shikimate pocket. Glycine 247 is an NADP(+) binding site.

The protein belongs to the shikimate dehydrogenase family. In terms of assembly, homodimer.

It carries out the reaction shikimate + NADP(+) = 3-dehydroshikimate + NADPH + H(+). The protein operates within metabolic intermediate biosynthesis; chorismate biosynthesis; chorismate from D-erythrose 4-phosphate and phosphoenolpyruvate: step 4/7. Its function is as follows. Involved in the biosynthesis of the chorismate, which leads to the biosynthesis of aromatic amino acids. Catalyzes the reversible NADPH linked reduction of 3-dehydroshikimate (DHSA) to yield shikimate (SA). The protein is Shikimate dehydrogenase (NADP(+)) of Methanocaldococcus jannaschii (strain ATCC 43067 / DSM 2661 / JAL-1 / JCM 10045 / NBRC 100440) (Methanococcus jannaschii).